The following is a 91-amino-acid chain: Putative pterin-4-alpha-carbinolamine dehydratase (91 aa).

Belongs to the pterin-4-alpha-carbinolamine dehydratase family.

It catalyses the reaction (4aS,6R)-4a-hydroxy-L-erythro-5,6,7,8-tetrahydrobiopterin = (6R)-L-erythro-6,7-dihydrobiopterin + H2O. This is Putative pterin-4-alpha-carbinolamine dehydratase from Halobacterium salinarum (strain ATCC 29341 / DSM 671 / R1).